The sequence spans 511 residues: Probable pectinesterase/pectinesterase inhibitor 17 (511 aa).

Residues 1–23 form the signal peptide; sequence MMAFRAYIINFVILCILVASTVS. The interval 24–171 is pectinesterase inhibitor 17; the sequence is GYNQKDVKAW…SNLLCNTLAI (148 aa). Residues N112 and N160 are each glycosylated (N-linked (GlcNAc...) asparagine). The pectinesterase 17 stretch occupies residues 237 to 414; it reads VKQGVYSENL…LRPVLGSTKT (178 aa). Residues T277 and Q307 each coordinate substrate. D330 (proton donor; for pectinesterase activity) is an active-site residue. C344 and C364 are joined by a disulfide. D351 serves as the catalytic Nucleophile; for pectinesterase activity. Substrate is bound by residues R418 and W420.

The protein in the N-terminal section; belongs to the PMEI family. This sequence in the C-terminal section; belongs to the pectinesterase family. As to expression, expressed in siliques.

The protein resides in the secreted. The protein localises to the cell wall. The catalysed reaction is [(1-&gt;4)-alpha-D-galacturonosyl methyl ester](n) + n H2O = [(1-&gt;4)-alpha-D-galacturonosyl](n) + n methanol + n H(+). It participates in glycan metabolism; pectin degradation; 2-dehydro-3-deoxy-D-gluconate from pectin: step 1/5. Acts in the modification of cell walls via demethylesterification of cell wall pectin. This chain is Probable pectinesterase/pectinesterase inhibitor 17 (PME17), found in Arabidopsis thaliana (Mouse-ear cress).